A 384-amino-acid polypeptide reads, in one-letter code: Sodium channel protein Nach (384 aa).

The Extracellular segment spans residues 1 to 319 (AAFAYFSGFM…LVSHLGSAFS (319 aa)). Asparagine 32 and asparagine 215 each carry an N-linked (GlcNAc...) asparagine glycan. Residues 320–340 (LFVGMSMLSLVEIIYYFTVIL) form a helical membrane-spanning segment. Residues 341–384 (RRNYVQECRARQKLQTLHRRPNFGWPGDKNSNQQKSVFYIRGRN) lie on the Cytoplasmic side of the membrane.

The protein belongs to the amiloride-sensitive sodium channel (TC 1.A.6) family.

The protein resides in the membrane. Functionally, part of a complex that plays a role in tracheal liquid clearance. Probable role in sodium transport. This chain is Sodium channel protein Nach (Nach), found in Drosophila virilis (Fruit fly).